Here is a 306-residue protein sequence, read N- to C-terminus: D-alanine--D-alanine ligase B (306 aa).

Catalysis depends on residues Glu15 and Ser150. An ATP-grasp domain is found at 101–303 (KLLWQGAGLP…FSQLVVRILE (203 aa)). Residue 134 to 189 (ISALGLPVIVKPSREGSSVGMSKVVAENALQDALRLAFQHDEEVLIEKWLSGPEFT) coordinates ATP. Mg(2+)-binding residues include Asp257, Glu270, and Asn272. Ser281 is an active-site residue.

It belongs to the D-alanine--D-alanine ligase family. Monomer. It depends on Mg(2+) as a cofactor. Mn(2+) serves as cofactor.

It localises to the cytoplasm. The catalysed reaction is 2 D-alanine + ATP = D-alanyl-D-alanine + ADP + phosphate + H(+). Its pathway is cell wall biogenesis; peptidoglycan biosynthesis. Functionally, cell wall formation. In Escherichia coli O157:H7, this protein is D-alanine--D-alanine ligase B (ddlB).